A 456-amino-acid chain; its full sequence is Bifunctional protein GlmU (456 aa).

The interval 1-231 is pyrophosphorylase; that stretch reads MERTCLAIIL…EEELTGCNTR (231 aa). UDP-N-acetyl-alpha-D-glucosamine contacts are provided by residues 10-13, K24, Q77, and 82-83; these read LAAG and GT. Residue D107 coordinates Mg(2+). G143, E157, N172, and N229 together coordinate UDP-N-acetyl-alpha-D-glucosamine. N229 contacts Mg(2+). The tract at residues 232 to 252 is linker; sequence AELAYIERLWQQRRRQELMLA. Residues 253–456 form an N-acetyltransferase region; the sequence is GVSMVAPETV…AARKKVKAAE (204 aa). 2 residues coordinate UDP-N-acetyl-alpha-D-glucosamine: R318 and K336. H348 serves as the catalytic Proton acceptor. Positions 351 and 362 each coordinate UDP-N-acetyl-alpha-D-glucosamine. Acetyl-CoA-binding positions include A365, 371-372, S390, S408, and R425; that span reads NY.

This sequence in the N-terminal section; belongs to the N-acetylglucosamine-1-phosphate uridyltransferase family. It in the C-terminal section; belongs to the transferase hexapeptide repeat family. In terms of assembly, homotrimer. It depends on Mg(2+) as a cofactor.

The protein localises to the cytoplasm. It catalyses the reaction alpha-D-glucosamine 1-phosphate + acetyl-CoA = N-acetyl-alpha-D-glucosamine 1-phosphate + CoA + H(+). It carries out the reaction N-acetyl-alpha-D-glucosamine 1-phosphate + UTP + H(+) = UDP-N-acetyl-alpha-D-glucosamine + diphosphate. It participates in nucleotide-sugar biosynthesis; UDP-N-acetyl-alpha-D-glucosamine biosynthesis; N-acetyl-alpha-D-glucosamine 1-phosphate from alpha-D-glucosamine 6-phosphate (route II): step 2/2. Its pathway is nucleotide-sugar biosynthesis; UDP-N-acetyl-alpha-D-glucosamine biosynthesis; UDP-N-acetyl-alpha-D-glucosamine from N-acetyl-alpha-D-glucosamine 1-phosphate: step 1/1. It functions in the pathway bacterial outer membrane biogenesis; LPS lipid A biosynthesis. Its function is as follows. Catalyzes the last two sequential reactions in the de novo biosynthetic pathway for UDP-N-acetylglucosamine (UDP-GlcNAc). The C-terminal domain catalyzes the transfer of acetyl group from acetyl coenzyme A to glucosamine-1-phosphate (GlcN-1-P) to produce N-acetylglucosamine-1-phosphate (GlcNAc-1-P), which is converted into UDP-GlcNAc by the transfer of uridine 5-monophosphate (from uridine 5-triphosphate), a reaction catalyzed by the N-terminal domain. The protein is Bifunctional protein GlmU of Sinorhizobium fredii (strain NBRC 101917 / NGR234).